The following is a 224-amino-acid chain: Putative cytochrome c-type biogenesis protein DbsD-like (224 aa).

5 helical membrane passes run 32-52 (FIFL…ILPV), 74-94 (FLFC…ATLI), 104-124 (GIPT…LNIV), 150-170 (GIGI…LVWI), and 176-196 (IFTG…PIII).

Belongs to the DsbD family.

It is found in the plastid. Its subcellular location is the chloroplast membrane. Its function is as follows. Could be involved in cytochrome c synthesis. The chain is Putative cytochrome c-type biogenesis protein DbsD-like from Pyropia yezoensis (Susabi-nori).